The chain runs to 276 residues: NADPH-dependent 7-cyano-7-deazaguanine reductase (276 aa).

Ile80–Ser82 contacts substrate. Ser82–Lys83 provides a ligand contact to NADPH. Cys178 acts as the Thioimide intermediate in catalysis. Residue Asp185 is the Proton donor of the active site. A substrate-binding site is contributed by His217 to Glu218. Residue Arg246 to Gly247 participates in NADPH binding.

The protein belongs to the GTP cyclohydrolase I family. QueF type 2 subfamily. Homodimer.

The protein localises to the cytoplasm. The catalysed reaction is 7-aminomethyl-7-carbaguanine + 2 NADP(+) = 7-cyano-7-deazaguanine + 2 NADPH + 3 H(+). The protein operates within tRNA modification; tRNA-queuosine biosynthesis. In terms of biological role, catalyzes the NADPH-dependent reduction of 7-cyano-7-deazaguanine (preQ0) to 7-aminomethyl-7-deazaguanine (preQ1). The protein is NADPH-dependent 7-cyano-7-deazaguanine reductase of Teredinibacter turnerae (strain ATCC 39867 / T7901).